The chain runs to 177 residues: Large ribosomal subunit protein uL6 (177 aa).

It belongs to the universal ribosomal protein uL6 family. Part of the 50S ribosomal subunit.

In terms of biological role, this protein binds to the 23S rRNA, and is important in its secondary structure. It is located near the subunit interface in the base of the L7/L12 stalk, and near the tRNA binding site of the peptidyltransferase center. In Rhizorhabdus wittichii (strain DSM 6014 / CCUG 31198 / JCM 15750 / NBRC 105917 / EY 4224 / RW1) (Sphingomonas wittichii), this protein is Large ribosomal subunit protein uL6.